A 196-amino-acid polypeptide reads, in one-letter code: UPF0319 protein VV0948 (196 aa).

Positions 1–19 are cleaved as a signal peptide; the sequence is MKKMMILSALALFSSSLFA.

This sequence belongs to the UPF0319 family.

In Vibrio vulnificus (strain YJ016), this protein is UPF0319 protein VV0948.